The sequence spans 38 residues: Mu/omega-theraphotoxin-Mb1a (38 aa).

Intrachain disulfides connect Cys7-Cys21, Cys14-Cys26, and Cys20-Cys33. Thr38 carries the post-translational modification Threonine amide.

Belongs to the neurotoxin 10 (Hwtx-1) family. 28 (Jztx-11) subfamily. As to expression, expressed by the venom gland.

It localises to the secreted. Functionally, paralytic toxin that inhibits insect voltage-gated sodium (Nav) and calcium (Cav) channels in P.americana (American cockroach) dorsal unpaired median (DUM) neurons, and inhibits the B.germanica (German cockroach) Nav channel (BgNaV1). Also shows a delay in fast inactivation when tested on BgNaV1. May act as a gating-modifier toxin on Nav and as a pore blocker on Cav. In vivo, reversibly paralyzes both L.cuprina (Australian sheep blowfly) and M.domestica (housefly), but does not affect larvae of H.armigera (cotton bollworms). The chain is Mu/omega-theraphotoxin-Mb1a from Monocentropus balfouri (Socotra Island blue baboon tarantula).